We begin with the raw amino-acid sequence, 261 residues long: uncharacterized protein (261 aa).

The segment covering 20 to 34 (TMSTPFLESDNSNTQ) has biased composition (polar residues). The segment at 20-55 (TMSTPFLESDNSNTQSISGRIGSNNNSNSKNSGGIG) is disordered. Positions 35–51 (SISGRIGSNNNSNSKNS) are enriched in low complexity. Transmembrane regions (helical) follow at residues 113-133 (LFSG…ILLL), 183-200 (LIFW…ILFF), and 204-226 (IISL…MANV).

It belongs to the TVP23 family.

Its subcellular location is the membrane. This is an uncharacterized protein from Dictyostelium discoideum (Social amoeba).